We begin with the raw amino-acid sequence, 23 residues long: Acidic phospholipase A2 CTs-A2 (23 aa).

Requires Ca(2+) as cofactor. In terms of processing, contains 7 disulfide bonds. In terms of tissue distribution, expressed by the venom gland.

It is found in the secreted. The catalysed reaction is a 1,2-diacyl-sn-glycero-3-phosphocholine + H2O = a 1-acyl-sn-glycero-3-phosphocholine + a fatty acid + H(+). Snake venom phospholipase A2 (PLA2) that shows a moderate inhibition of ADP-induced human platelet aggregation when tested on platelet rich plasma. Exhibits moderate hydrolytic activities and prefers the anionic micelles (dPPC with deoxycholate) to the zwitterionic micelles (dPPC with Triton X-100). PLA2 catalyzes the calcium-dependent hydrolysis of the 2-acyl groups in 3-sn-phosphoglycerides. This is Acidic phospholipase A2 CTs-A2 from Trimeresurus stejnegeri (Chinese green tree viper).